A 258-amino-acid chain; its full sequence is uncharacterized protein (258 aa).

This is an uncharacterized protein from Methanocaldococcus jannaschii (strain ATCC 43067 / DSM 2661 / JAL-1 / JCM 10045 / NBRC 100440) (Methanococcus jannaschii).